A 563-amino-acid chain; its full sequence is Arginine--tRNA ligase (563 aa).

The short motif at 121–131 (PNIAKPFSIGH) is the 'HIGH' region element.

It belongs to the class-I aminoacyl-tRNA synthetase family. Monomer.

The protein localises to the cytoplasm. The enzyme catalyses tRNA(Arg) + L-arginine + ATP = L-arginyl-tRNA(Arg) + AMP + diphosphate. This is Arginine--tRNA ligase from Streptococcus pyogenes serotype M49 (strain NZ131).